The primary structure comprises 539 residues: Acid-sensing ion channel 4 (539 aa).

At Met1–Thr68 the chain is on the cytoplasmic side. A helical transmembrane segment spans residues Leu69–Ala89. The Extracellular segment spans residues Arg90–Ala438. 2 cysteine pairs are disulfide-bonded: Cys118–Cys202 and Cys180–Cys187. N-linked (GlcNAc...) asparagine glycans are attached at residues Asn191, Asn243, Asn341, and Asn376. Disulfide bonds link Cys296-Cys375, Cys318-Cys371, Cys322-Cys369, Cys331-Cys353, and Cys333-Cys345. Residues Leu439 to Leu459 traverse the membrane as a helical segment. A GAS motif; ion selectivity filter motif is present at residues Gly452–Ser454. The Cytoplasmic segment spans residues Glu460–Cys539. A disordered region spans residues Lys500–Gly531.

The protein belongs to the amiloride-sensitive sodium channel (TC 1.A.6) family. ASIC4 subfamily. As to quaternary structure, homotrimer. Heterotrimer; with other ASIC proteins producing functional channels.

Its subcellular location is the cell membrane. Its function is as follows. Does not exhibit measurable stand-alone pH-gated sodium channel activity but may form pH-gated heterotrimeric sodium channels. Its activity could also depend on alternative gating mechanisms. The chain is Acid-sensing ion channel 4 from Mus musculus (Mouse).